The following is a 3174-amino-acid chain: Intermembrane lipid transfer protein VPS13A (3174 aa).

A Chorein N-terminal domain is found at 3 to 116; it reads FESVVVDVLN…LMEAKQQELK (114 aa). TPR repeat units follow at residues 212 to 245, 373 to 406, and 537 to 575; these read LFAYWNVKSQMFYLSDYDNSLDDLKNGIVNENIV, LTSKKPPGELLVSLEELEKTLDVFNITIARQTAE, and IDSFHITGLPDNSEKPRLLSSLDDAMSLFQITFEINPLD. Residue S839 is modified to Phosphoserine. An FFAT motif is present at residues 842–848; the sequence is EFFDAPC. TPR repeat units lie at residues 1256-1289 and 1291-1320; these read VIDLITIKLSEMRLYRSRFINDAYQEVLDLLLPL and LEVVVERNLCWEWYQEVPCFNVNAQLKPME. The residue at position 1416 (S1416) is a Phosphoserine. The stretch at 2009–2041 is one TPR 6 repeat; it reads YEGDTLLGTASPENEFNIPLGSYRSFIFLKPED. The region spanning 2209–2454 is the SHR-BD domain; it reads VAFHSPYWMV…VFYTWADPVG (246 aa). 3 TPR repeats span residues 2568 to 2601, 2717 to 2751, and 2860 to 2898; these read PMSVKHTEKLEREFKEYTESSPSEDKVIQLDTNV, LGFIYALTDLMTEAEVTENTEVELFHKDIEAFKEE, and ILGLDVLGNPFGLIREFSEGVEAFFYEPYQGAIQGPEEF. The interval 2751 to 3174 is required for mitochondrial localization; sequence EYKTASLVDQ…QEAREPSPSL (424 aa). A required for lipid droplet localization region spans residues 2953–3027; sequence PAGFREGITR…SSTFQGIKRA (75 aa). The stretch at 3086–3119 is one TPR 10 repeat; that stretch reads MLMITRRGVLFVTKGTFGQLTCEWQYSFDEFTKE.

This sequence belongs to the VPS13 family. Interacts (via FFAT motif) with VAPA and VAPB. Interacts with RAB7A. Interacts with XK. In terms of tissue distribution, expressed in red blood cells (at protein level). Widely expressed, with high expression in brain, heart, skeletal muscle and kidney.

It localises to the mitochondrion outer membrane. Its subcellular location is the endoplasmic reticulum membrane. It is found in the endosome membrane. The protein resides in the lysosome membrane. The protein localises to the lipid droplet. It localises to the golgi apparatus. Its subcellular location is the cytoplasmic vesicle. It is found in the secretory vesicle. The protein resides in the neuronal dense core vesicle. Functionally, mediates the transfer of lipids between membranes at organelle contact sites. Binds phospholipids. Required for the formation or stabilization of ER-mitochondria contact sites which enable transfer of lipids between the ER and mitochondria. Negatively regulates lipid droplet size and motility. Required for efficient lysosomal protein degradation. The protein is Intermembrane lipid transfer protein VPS13A (VPS13A) of Homo sapiens (Human).